We begin with the raw amino-acid sequence, 1073 residues long: Probable cellulose synthase A catalytic subunit 2 [UDP-forming] (1073 aa).

At 1 to 270 (MDGAKSGKQC…SSSRINPYRM (270 aa)) the chain is on the cytoplasmic side. Zn(2+) contacts are provided by C13, C16, C32, C35, C40, C43, C55, and C58. The segment at 13-59 (CQICGDGVGTAADGELFTACDVCGFPVCRPCYEYERKDGSQACPQCK) adopts an RING-type; degenerate zinc-finger fold. Residues 66-98 (KGSPPILGDESDDVDADDASDVNYPTSGNQDHK) are disordered. Positions 74 to 85 (DESDDVDADDAS) are enriched in acidic residues. The helical transmembrane segment at 271–291 (VIVLRLIVLCIFLHYRITNPV) threads the bilayer. At 292–293 (RN) the chain is on the extracellular side. Residues 294-314 (AYPLWLLSVICEIWFALSWIL) traverse the membrane as a helical segment. The Cytoplasmic portion of the chain corresponds to 315–856 (DQFPKWSPIN…INTTIYPLTS (542 aa)). Positions 353, 359, 360, and 389 each coordinate UDP-alpha-D-glucose. D389 is a catalytic residue. A coiled-coil region spans residues 443 to 470 (VKDRRAMKREYEEFKVRVNALVAKAQKV). A UDP-alpha-D-glucose-binding site is contributed by K530. Positions 531 and 555 each coordinate Mn(2+). Positions 655-676 (GGRKKTKKSKEKSTEKKKSHKH) are disordered. D773 is an active-site residue. The chain crosses the membrane as a helical span at residues 857 to 877 (IPLLLYCILPAICLLTGKFII). Over 878 to 882 (PEISN) the chain is Extracellular. A helical membrane pass occupies residues 883–903 (FASIWFISLFLSIFATGILEM). At 904–918 (RWSGVGIDEWWRNEQ) the chain is on the cytoplasmic side. A helical transmembrane segment spans residues 919–939 (FWVIGGISAHLFAVFQGLLKV). At 940-969 (LAGIDTSFTVTSKASDEEGDFAELYMFKWT) the chain is on the extracellular side. A helical transmembrane segment spans residues 970–990 (TLLIPPTTILIINLVGVVAGI). Over 991–1001 (SYAINSGYQSW) the chain is Cytoplasmic. A helical transmembrane segment spans residues 1002–1022 (GPLFGKLFFAFWVIVHLYPFL). Residues 1023 to 1031 (KGLMGRQNR) lie on the Extracellular side of the membrane. Residues 1032-1052 (TPTIVVVWAILLASIFSLLWV) form a helical membrane-spanning segment. Residues 1053-1073 (RIDPFTTRVTGPDTQKCGINC) are Cytoplasmic-facing.

It belongs to the glycosyltransferase 2 family. Plant cellulose synthase subfamily. It depends on Mn(2+) as a cofactor. Zn(2+) serves as cofactor.

The protein resides in the cell membrane. It catalyses the reaction [(1-&gt;4)-beta-D-glucosyl](n) + UDP-alpha-D-glucose = [(1-&gt;4)-beta-D-glucosyl](n+1) + UDP + H(+). Its pathway is glycan metabolism; plant cellulose biosynthesis. Probable catalytic subunit of cellulose synthase terminal complexes ('rosettes'), required for beta-1,4-glucan microfibril crystallization, a major mechanism of the cell wall formation. The polypeptide is Probable cellulose synthase A catalytic subunit 2 [UDP-forming] (CESA2) (Oryza sativa subsp. japonica (Rice)).